The sequence spans 356 residues: MAISFQLLPELPVGVKHGVGGIIGQKLYAGLGSSGNAFFVLDLKDMNSGWKSAADFPGIARNDAAYTVCGNKLYVFSGAGIEGNNSFPTVLMDGYVFDSQINQWKRLERTLPTGFLGASCCSLSPTEIIFFGGYDKDTFNNFLSEISKIDVTKEPNKYKELITIFMSQPIDNYNWNKNVWSFTPCNEHWSVVGENPFKPNCGSGIIHKNNVVTLIEGEVKPGLRSLETKRYLFKEGKLEYSDSSASIIDICKNHEGLAGHFFGEIDNKIIVIGGAYFIGSQDAFIKGNLYAHNGLIKHFSSNVWIFDGKSWENKCQLDAAGIAYGVSASNGKAMYVLGGENSNGDAMTRCLSLLMD.

4 Kelch repeats span residues 72–125, 163–210, 288–331, and 333–355; these read KLYV…SLSP, TIFM…HKNN, NLYA…ASNG, and AMYV…SLLM.

The polypeptide is Kelch domain-containing protein VC_1773 (Vibrio cholerae serotype O1 (strain ATCC 39315 / El Tor Inaba N16961)).